The primary structure comprises 257 residues: Snake venom serine protease KN8 (257 aa).

The signal sequence occupies residues methionine 1–alanine 18. A propeptide spanning residues glutamine 19 to leucine 24 is cleaved from the precursor. The region spanning valine 25–alanine 248 is the Peptidase S1 domain. 5 disulfides stabilise this stretch: cysteine 31–cysteine 162, cysteine 49–cysteine 65, cysteine 141–cysteine 209, cysteine 173–cysteine 188, and cysteine 199–cysteine 224. The Charge relay system role is filled by histidine 64. Asparagine 102 carries an N-linked (GlcNAc...) asparagine glycan. The active-site Charge relay system is the aspartate 109. N-linked (GlcNAc...) asparagine glycosylation is found at asparagine 120 and asparagine 121. Catalysis depends on serine 203, which acts as the Charge relay system.

Belongs to the peptidase S1 family. Snake venom subfamily. Monomer. Expressed by the venom gland.

The protein resides in the secreted. Snake venom serine protease that may act in the hemostasis system of the prey. This is Snake venom serine protease KN8 from Trimeresurus stejnegeri (Chinese green tree viper).